The following is a 349-amino-acid chain: Polyamine aminopropyltransferase 2 (349 aa).

A PABS domain is found at 29-267; that stretch reads DGAITAIEDS…SSWGFLLASD (239 aa). Q60 is an S-methyl-5'-thioadenosine binding site. Residues H91 and E115 each coordinate spermidine. Residues D135 and 167-168 each bind S-methyl-5'-thioadenosine; that span reads DG. D185 functions as the Proton acceptor in the catalytic mechanism. An S-methyl-5'-thioadenosine-binding site is contributed by P194.

Belongs to the spermidine/spermine synthase family. Homodimer or homotetramer.

The protein resides in the cytoplasm. It carries out the reaction S-adenosyl 3-(methylsulfanyl)propylamine + putrescine = S-methyl-5'-thioadenosine + spermidine + H(+). The protein operates within amine and polyamine biosynthesis; spermidine biosynthesis; spermidine from putrescine: step 1/1. Catalyzes the irreversible transfer of a propylamine group from the amino donor S-adenosylmethioninamine (decarboxy-AdoMet) to putrescine (1,4-diaminobutane) to yield spermidine. The chain is Polyamine aminopropyltransferase 2 from Pseudomonas aeruginosa (strain ATCC 15692 / DSM 22644 / CIP 104116 / JCM 14847 / LMG 12228 / 1C / PRS 101 / PAO1).